The sequence spans 92 residues: Small ribosomal subunit protein uS19 (92 aa).

Belongs to the universal ribosomal protein uS19 family.

In terms of biological role, protein S19 forms a complex with S13 that binds strongly to the 16S ribosomal RNA. This is Small ribosomal subunit protein uS19 from Baumannia cicadellinicola subsp. Homalodisca coagulata.